The following is a 469-amino-acid chain: Siroheme synthase (469 aa).

The tract at residues Met1–Leu211 is precorrin-2 dehydrogenase /sirohydrochlorin ferrochelatase. Residues Glu29–Gln30 and Asp50–Pro51 each bind NAD(+). Ser136 carries the phosphoserine modification. The tract at residues Gly227–Asp469 is uroporphyrinogen-III C-methyltransferase. Pro236 serves as a coordination point for S-adenosyl-L-methionine. Asp259 (proton acceptor) is an active-site residue. Lys281 (proton donor) is an active-site residue. S-adenosyl-L-methionine-binding positions include Gly312–Asp314, Ile317, Thr342–Ala343, Met394, and Gly423.

In the N-terminal section; belongs to the precorrin-2 dehydrogenase / sirohydrochlorin ferrochelatase family. It in the C-terminal section; belongs to the precorrin methyltransferase family.

It catalyses the reaction uroporphyrinogen III + 2 S-adenosyl-L-methionine = precorrin-2 + 2 S-adenosyl-L-homocysteine + H(+). It carries out the reaction precorrin-2 + NAD(+) = sirohydrochlorin + NADH + 2 H(+). The enzyme catalyses siroheme + 2 H(+) = sirohydrochlorin + Fe(2+). It participates in cofactor biosynthesis; adenosylcobalamin biosynthesis; precorrin-2 from uroporphyrinogen III: step 1/1. Its pathway is cofactor biosynthesis; adenosylcobalamin biosynthesis; sirohydrochlorin from precorrin-2: step 1/1. It functions in the pathway porphyrin-containing compound metabolism; siroheme biosynthesis; precorrin-2 from uroporphyrinogen III: step 1/1. The protein operates within porphyrin-containing compound metabolism; siroheme biosynthesis; siroheme from sirohydrochlorin: step 1/1. It participates in porphyrin-containing compound metabolism; siroheme biosynthesis; sirohydrochlorin from precorrin-2: step 1/1. In terms of biological role, multifunctional enzyme that catalyzes the SAM-dependent methylations of uroporphyrinogen III at position C-2 and C-7 to form precorrin-2 via precorrin-1. Then it catalyzes the NAD-dependent ring dehydrogenation of precorrin-2 to yield sirohydrochlorin. Finally, it catalyzes the ferrochelation of sirohydrochlorin to yield siroheme. The polypeptide is Siroheme synthase (Hahella chejuensis (strain KCTC 2396)).